The following is a 126-amino-acid chain: Fluoride-specific ion channel FluC (126 aa).

The next 4 membrane-spanning stretches (helical) occupy residues 5-25 (FILA…LVGI), 39-59 (TLFI…LFAV), 69-89 (IFLV…SLDT), and 103-123 (AYMI…IQIV). 2 residues coordinate Na(+): glycine 77 and threonine 80.

The protein belongs to the fluoride channel Fluc/FEX (TC 1.A.43) family.

It localises to the cell inner membrane. The enzyme catalyses fluoride(in) = fluoride(out). Its activity is regulated as follows. Na(+) is not transported, but it plays an essential structural role and its presence is essential for fluoride channel function. Fluoride-specific ion channel. Important for reducing fluoride concentration in the cell, thus reducing its toxicity. This chain is Fluoride-specific ion channel FluC, found in Nitrobacter winogradskyi (strain ATCC 25391 / DSM 10237 / CIP 104748 / NCIMB 11846 / Nb-255).